The chain runs to 396 residues: Phosphoglycerate kinase (396 aa).

Substrate contacts are provided by residues 21 to 23 (DFN), Arg-36, 59 to 62 (HFDR), Arg-118, and Arg-151. ATP is bound by residues Lys-201, Glu-323, and 353 to 356 (GGDT).

The protein belongs to the phosphoglycerate kinase family. In terms of assembly, monomer.

It localises to the cytoplasm. The catalysed reaction is (2R)-3-phosphoglycerate + ATP = (2R)-3-phospho-glyceroyl phosphate + ADP. It participates in carbohydrate degradation; glycolysis; pyruvate from D-glyceraldehyde 3-phosphate: step 2/5. The protein is Phosphoglycerate kinase of Caulobacter vibrioides (strain ATCC 19089 / CIP 103742 / CB 15) (Caulobacter crescentus).